The primary structure comprises 162 residues: MIRIGHGFDVHAFGGEGPIIIGGVAIPYEKGLVAHSDGDVALHALTDALLGAMALGDIGKLFPDTDIQYKGADSRRLLRTAYQAILDKGYQVGNVDITIIAQAPKMRPYIDAMRTVIAQDLHCDIEQVNVKATTTEKLGFTGRSEGIACEAVALLIKQTGTK.

A divalent metal cation-binding residues include aspartate 9 and histidine 11. 4-CDP-2-C-methyl-D-erythritol 2-phosphate is bound by residues 9-11 (DVH) and 35-36 (HS). Histidine 43 provides a ligand contact to a divalent metal cation. 4-CDP-2-C-methyl-D-erythritol 2-phosphate is bound by residues 57-59 (DIG), 62-66 (FPDTD), 133-136 (TTTE), phenylalanine 140, and arginine 143.

It belongs to the IspF family. In terms of assembly, homotrimer. The cofactor is a divalent metal cation.

The catalysed reaction is 4-CDP-2-C-methyl-D-erythritol 2-phosphate = 2-C-methyl-D-erythritol 2,4-cyclic diphosphate + CMP. It participates in isoprenoid biosynthesis; isopentenyl diphosphate biosynthesis via DXP pathway; isopentenyl diphosphate from 1-deoxy-D-xylulose 5-phosphate: step 4/6. Functionally, involved in the biosynthesis of isopentenyl diphosphate (IPP) and dimethylallyl diphosphate (DMAPP), two major building blocks of isoprenoid compounds. Catalyzes the conversion of 4-diphosphocytidyl-2-C-methyl-D-erythritol 2-phosphate (CDP-ME2P) to 2-C-methyl-D-erythritol 2,4-cyclodiphosphate (ME-CPP) with a corresponding release of cytidine 5-monophosphate (CMP). This is 2-C-methyl-D-erythritol 2,4-cyclodiphosphate synthase from Histophilus somni (strain 129Pt) (Haemophilus somnus).